We begin with the raw amino-acid sequence, 242 residues long: ADP-dependent L-serine kinase SerK (242 aa).

Glutamate 30 is an active-site residue. Serine 43, isoleucine 49, tryptophan 51, and lysine 52 together coordinate ADP. Valine 68 is an O-phospho-L-serine binding site. ADP is bound by residues aspartate 69, glycine 70, histidine 71, histidine 72, and arginine 73. Position 69 (aspartate 69) interacts with Mg(2+). O-phospho-L-serine-binding residues include glycine 70, histidine 71, and histidine 72. O-phospho-L-serine is bound by residues tryptophan 102, lysine 221, threonine 223, and histidine 225.

The protein belongs to the SerK family. Mg(2+) is required as a cofactor.

The catalysed reaction is L-serine + ADP = O-phospho-L-serine + AMP + H(+). It participates in amino-acid biosynthesis; L-cysteine biosynthesis; L-cysteine from L-serine: step 1/2. In terms of biological role, free serine kinase that uses ADP to phosphorylate L-serine to yield O-phospho-L-serine and AMP. This Thermococcus kodakarensis (strain ATCC BAA-918 / JCM 12380 / KOD1) (Pyrococcus kodakaraensis (strain KOD1)) protein is ADP-dependent L-serine kinase SerK.